The primary structure comprises 272 residues: MTALRALWSEMQDTCTSLGLMLSVVLLAGLARVVARQQQLHRPMAHAFVLEFLATLQLCCCTHELLLLSEQEPAHPTWPLTLIYFFTLVHGLTLVGTSSNPCGVMMQMMLGGMSPEMGAVRLLAQLIGALGSRYCIGALWSLGLTKYHVSERSFACKNPIQVDLPKAVIVEALCSFIFHSALLNFQEVRPKLRIHLLAALITFLVYAGGSLTGAVFNPALALSLHFKCFDEAFLQFFIVYWLAPSLGILLMILMFSFFLPWLYNNHTINKKE.

At 1–14 the chain is on the cytoplasmic side; the sequence is MTALRALWSEMQDT. A helical membrane pass occupies residues 15 to 35; sequence CTSLGLMLSVVLLAGLARVVA. Topologically, residues 36 to 47 are lumenal; it reads RQQQLHRPMAHA. The chain crosses the membrane as a helical span at residues 48–68; it reads FVLEFLATLQLCCCTHELLLL. Residues 69–75 are Cytoplasmic-facing; that stretch reads SEQEPAH. Residues 76–96 form a helical membrane-spanning segment; the sequence is PTWPLTLIYFFTLVHGLTLVG. Over 97 to 167 the chain is Lumenal; that stretch reads TSSNPCGVMM…NPIQVDLPKA (71 aa). The short motif at 100 to 102 is the NPC element; the sequence is NPC. Residues 168-188 traverse the membrane as a helical segment; the sequence is VIVEALCSFIFHSALLNFQEV. Topologically, residues 189–195 are cytoplasmic; sequence RPKLRIH. The chain crosses the membrane as a helical span at residues 196 to 216; it reads LLAALITFLVYAGGSLTGAVF. An NPA motif is present at residues 217–219; sequence NPA. At 217–235 the chain is on the lumenal side; the sequence is NPALALSLHFKCFDEAFLQ. A helical membrane pass occupies residues 236-256; it reads FFIVYWLAPSLGILLMILMFS. The Cytoplasmic portion of the chain corresponds to 257–272; the sequence is FFLPWLYNNHTINKKE.

Belongs to the MIP/aquaporin (TC 1.A.8) family. AQP11/AQP12 subfamily. In terms of assembly, homodimer; disulfide-linked. Homotetramer. Can also form homomultimer. In terms of processing, not glycosylated. Expressed in retina specifically at retinal Mueller glial cells.

Its subcellular location is the endoplasmic reticulum membrane. The protein resides in the cytoplasmic vesicle membrane. It localises to the cell membrane. The catalysed reaction is H2O(in) = H2O(out). It carries out the reaction glycerol(in) = glycerol(out). It catalyses the reaction H2O2(out) = H2O2(in). In terms of biological role, channel protein that facilitates the transport of water, glycerol and hydrogen peroxide across membrane of cell or organelles guaranteeing intracellular homeostasis in several organes like liver, kidney and brain. In situation of stress, participates in endoplasmic reticulum (ER) homeostasis by regulating redox homeostasis through the transport of hydrogen peroxide across the endoplasmic reticulum membrane thereby regulating the oxidative stress through the NADPH oxidase 2 pathway. Plays a role by maintaining an environment suitable for translation or protein foldings in the ER lumen namely by participating in the PKD1 glycosylation processing resulting in regulation of PKD1 membrane trafficking thereby preventing the accumulation of unfolding protein in ER. Plays a role in the proximal tubule function by regulating its endosomal acidification. May play a role in postnatal kidney development. The polypeptide is Aquaporin-11 (Equus caballus (Horse)).